Reading from the N-terminus, the 487-residue chain is Alpha-1,4-L-rhamnosidase (487 aa).

The N-terminal stretch at 1-30 (MKNKKRLCHILKYIITCFLFGVIFIIPIQA) is a signal peptide. Glu-199 (proton donor) is an active-site residue.

This sequence belongs to the glycosyl hydrolase 39 family.

It is found in the periplasm. Alpha-rhamnosidase involved in ulvan degradation. Ulvan is the main polysaccharide component of the Ulvales (green seaweed) cell wall. It is composed of disaccharide building blocks comprising 3-sulfated rhamnose (Rha3S) linked to D-glucuronic acid (GlcA), L-iduronic acid (IduA), or D-xylose (Xyl). Endo-acting alpha-1,4-L-rhamnosidase cleaves rhamnose sections interspersed between xylose residues within the polymer, degrading larger oligomers with consecutive Xyl-Rha3S units that are resistant to the ulvan lyases and producing dimers Xyl-Rha3S and Xyl2S-Rha3S as the smallest products. The polypeptide is Alpha-1,4-L-rhamnosidase (Formosa agariphila (strain DSM 15362 / KCTC 12365 / LMG 23005 / KMM 3901 / M-2Alg 35-1)).